The sequence spans 508 residues: Cobyric acid synthase (508 aa).

One can recognise a GATase cobBQ-type domain in the interval S266–V464. The Nucleophile role is filled by C347. H456 is a catalytic residue.

The protein belongs to the CobB/CobQ family. CobQ subfamily.

It participates in cofactor biosynthesis; adenosylcobalamin biosynthesis. In terms of biological role, catalyzes amidations at positions B, D, E, and G on adenosylcobyrinic A,C-diamide. NH(2) groups are provided by glutamine, and one molecule of ATP is hydrogenolyzed for each amidation. The protein is Cobyric acid synthase of Methylibium petroleiphilum (strain ATCC BAA-1232 / LMG 22953 / PM1).